The chain runs to 425 residues: MKLPADLRSYSQITRNSIAMILAGGRGTRLRQLTDWRAKPAVPFGGKFRIIDFPLSNCVNSGIRRIGVATQYKAQSLISHIQQGWGFLDGRFQEFIELLPAQQRTEESWYQGTADAVYQNIDILRSHNPDYVLILGGDHVYKMDYAKLLADHIAKSAEMTIACIDLPLEEASAFGVMSVTKDGRVTDFTEKPSVPTAVPGRPGYALVSMGIYVFNADFLFDQLIRDHDDPNSSHDFGKDLIPHLVPRSRVFTHRFSDSCVNMVSGVPYWRDVGTVEAYWEANLDLVQVTPDLNLYDQDWPIWTHQEQLPPAKFVFDNDDRRGQALDSMVSGGCIISGATVRRSLLFSNVQVRSYSVLEDSVILPNVDVGRNARLRRVVVDKNCIIPPGLEVGFDPVEDRKHFYVTETGVTLVTPEMLGQKIHYVR.

Alpha-D-glucose 1-phosphate is bound by residues Tyr110, Gly175, 190-191 (EK), and Ser208.

Belongs to the bacterial/plant glucose-1-phosphate adenylyltransferase family. In terms of assembly, homotetramer.

The enzyme catalyses alpha-D-glucose 1-phosphate + ATP + H(+) = ADP-alpha-D-glucose + diphosphate. It participates in glycan biosynthesis; glycogen biosynthesis. Involved in the biosynthesis of ADP-glucose, a building block required for the elongation reactions to produce glycogen. Catalyzes the reaction between ATP and alpha-D-glucose 1-phosphate (G1P) to produce pyrophosphate and ADP-Glc. This is Glucose-1-phosphate adenylyltransferase from Nitrosospira multiformis (strain ATCC 25196 / NCIMB 11849 / C 71).